Here is a 423-residue protein sequence, read N- to C-terminus: Maltooligosaccharide ABC transporter solute-binding lipoprotein (423 aa).

The N-terminal stretch at 1 to 24 (MSSKFMKSTAVLGTVTLASLLLVA) is a signal peptide. The N-palmitoyl cysteine moiety is linked to residue Cys25. Residue Cys25 is the site of S-diacylglycerol cysteine attachment. Residues Tyr52, Asp77, Asp83, 103–104 (DR), Glu148, Asp193, Asn196, 251–254 (EGAG), Trp274, and Lys307 contribute to the substrate site.

The protein belongs to the bacterial solute-binding protein 1 family.

It is found in the cell membrane. Functionally, part of an ABC transporter complex involved in the uptake of maltodextrins. Binds glycogen-derived linear maltooligosaccharides increasing in size from maltotriose to maltooctaose with the highest affinity for maltotriose. Has a very weak affinity for maltose. Has also a very low affinity for maltotetraitol, indicating that the binding is selective for maltooligosaccharides with an intact reducing end. This is Maltooligosaccharide ABC transporter solute-binding lipoprotein (malX) from Streptococcus pneumoniae (strain ATCC BAA-255 / R6).